Here is a 485-residue protein sequence, read N- to C-terminus: Envelope glycoprotein C (485 aa).

An N-terminal signal peptide occupies residues 1–32 (MGLVNIMRFITFAYIICGGFILTRTSGTSASA). Residues 28 to 72 (TSASASPATPTTNTGEGTSSPVTPTYTTSTDSNNSTATNNSTDVN) show a composition bias toward low complexity. The disordered stretch occupies residues 28–88 (TSASASPATP…TPSHPHSHEN (61 aa)). Residues 33-444 (SPATPTTNTG…DASPIVEDMP (412 aa)) are Virion surface-facing. N-linked (GlcNAc...) asparagine; by host glycosylation is found at asparagine 60, asparagine 61, asparagine 66, asparagine 67, asparagine 72, asparagine 108, asparagine 116, asparagine 147, asparagine 220, asparagine 225, and asparagine 286. Cysteine 92 and cysteine 109 are disulfide-bonded. The Ig-like domain occupies 237–330 (PLMDLSVHPS…EWYRDEVSFS (94 aa)). Disulfide bonds link cysteine 256/cysteine 318, cysteine 357/cysteine 416, and cysteine 361/cysteine 390. A helical transmembrane segment spans residues 445-468 (VLTGIIAVTCGAAALALVVLITAV). Residues 469-485 (CFYCSKPSQVPYKKADF) lie on the Cytoplasmic side of the membrane.

It belongs to the herpesviridae glycoprotein C family. As to quaternary structure, interacts with host complement component C3; this interaction inhibits host immune response by disregulating complement cascade.

Its subcellular location is the virion membrane. Essential for the initial attachment to heparan sulfate moieties of the host cell surface proteoglycans. Also plays a role in host immune evasion by inhibiting the host complement cascade activation. The polypeptide is Envelope glycoprotein C (gC) (Equine herpesvirus 4 (strain 1942) (EHV-4)).